A 531-amino-acid chain; its full sequence is Calcium-dependent protein kinase 21 (531 aa).

Basic residues predominate over residues 1 to 10 (MGCFSSKHRK). The segment at 1–62 (MGCFSSKHRK…STPSSNPVSV (62 aa)) is disordered. Gly2 carries the N-myristoyl glycine lipid modification. Residues 48 to 60 (IHQQISTPSSNPV) are compositionally biased toward polar residues. In terms of domain architecture, Protein kinase spans 80-338 (YSLGKELGRG…AAQVLEHPWI (259 aa)). Residues 86-94 (LGRGQFGIT) and Lys109 each bind ATP. Asp204 acts as the Proton acceptor in catalysis. Ser244 carries the phosphoserine modification. Positions 343–373 (APDKPIDSAVLSRMKQFRAMNKLKKLALKVI) are autoinhibitory domain. 4 consecutive EF-hand domains span residues 380–415 (EEIK…LGSR), 416–451 (LSET…RYKL), 452–487 (DRDE…YGMG), and 488–522 (DEAS…GSTQ). Ca(2+)-binding residues include Asp393, Asp395, Ser397, Thr399, Glu404, Asp429, Asp431, Asn433, Thr435, Glu440, Asp465, Asp467, Ser469, His471, Glu476, Asp500, Asp502, Asp504, Arg506, and Glu511.

This sequence belongs to the protein kinase superfamily. Ser/Thr protein kinase family. CDPK subfamily. As to quaternary structure, interacts with SLAC1 and ABI1.

The protein localises to the cell membrane. The enzyme catalyses L-seryl-[protein] + ATP = O-phospho-L-seryl-[protein] + ADP + H(+). It carries out the reaction L-threonyl-[protein] + ATP = O-phospho-L-threonyl-[protein] + ADP + H(+). Its activity is regulated as follows. Activated by calcium. Autophosphorylation may play an important role in the regulation of the kinase activity. May play a role in signal transduction pathways that involve calcium as a second messenger. Mediates the phosphorylation and activation of the S-type anion efflux channel SLAC1. The protein is Calcium-dependent protein kinase 21 (CPK21) of Arabidopsis thaliana (Mouse-ear cress).